Reading from the N-terminus, the 876-residue chain is MATERYNPRDAEPRWQQKWNEDKVFETDNSDPREKYYVLEMFPYPSGRIHMGHVRNYAMGDVVARYKRARGYNVLHPMGWDAFGMPAENAAMERGVHPASWTYQNIASMKAQLKAMGLSLDWSREFATCDVDYYQHQQHLFLDFLEKGLVYRKQSKVNWDPVDNTVLANEQVIDGRGWRSGALVEQRELTQWFFKITDFSQELLDALDTLDQWPEKVRLMQKNWIGRSEGLTVRWEIVPETAPAGETEITVYTTRPDTLFGASFLAIAADHPLAKDAAAKNVEIEAFCEECRRAGTSLAALETAEKKGLDTGIRVRHPLDPSWELPVYIANFVLMDYGTGAIFGCPSGDQRDLDFARKYGLPVVPVVMPTDGDAASFSVGDTAYDGEGVMINSRFLDGKTTEEAFNIVADRLSAASLGNAPQGQRMINFRLRDWGISRQRYWGCPIPVIHCDACGVVPVPKKDLPVKLPEDVTFDQPGNPLDRHPTWRHVACPNCGKDARRETDTMDTFVDSSWYFTRFTAPWEAKPTDPEAANRWLPVDQYIGGIEHAILHLLYSRFFTRAMRETGHVAATEPFKGLFTQGMVVHETYSRGAGASREWVAPADIRIEEIDGKRRAFLLASDEEVAIGSIEKMSKSKKNVVDPDDIIASYGADTARFFVLSDSPPERDVIWSEAGVEGAHRFTQRLWRLISEAADCLSAVAPAPASEGEALTVSQAAHKTLKAVQNDYDKLWFNKAVARIYELVNALAAPLTRVAAGEGDIAYRAAVRDAAEILIQLVAPMTPHLAEECWAALGNAGLLARTDWPRYDETLVMENDVVLPVQINGKKRAELTISRDADQNAVTNAVLDLDAVKNALNGQAPKKIIVVPQRIVNIVV.

A 'HIGH' region motif is present at residues 43–53 (PYPSGRIHMGH). The 'KMSKS' region motif lies at 632-636 (KMSKS). Lys635 lines the ATP pocket.

The protein belongs to the class-I aminoacyl-tRNA synthetase family.

The protein resides in the cytoplasm. The catalysed reaction is tRNA(Leu) + L-leucine + ATP = L-leucyl-tRNA(Leu) + AMP + diphosphate. In Rhizobium etli (strain ATCC 51251 / DSM 11541 / JCM 21823 / NBRC 15573 / CFN 42), this protein is Leucine--tRNA ligase.